We begin with the raw amino-acid sequence, 340 residues long: Glycerol-3-phosphate dehydrogenase [NAD(P)+] (340 aa).

3 residues coordinate NADPH: W11, R33, and K110. Sn-glycerol 3-phosphate contacts are provided by K110, G144, and S146. NADPH is bound at residue A148. Sn-glycerol 3-phosphate is bound by residues K199, D252, S262, R263, and N264. Residue K199 is the Proton acceptor of the active site. R263 contributes to the NADPH binding site. Residues V287 and E289 each coordinate NADPH.

This sequence belongs to the NAD-dependent glycerol-3-phosphate dehydrogenase family.

The protein localises to the cytoplasm. The catalysed reaction is sn-glycerol 3-phosphate + NAD(+) = dihydroxyacetone phosphate + NADH + H(+). It carries out the reaction sn-glycerol 3-phosphate + NADP(+) = dihydroxyacetone phosphate + NADPH + H(+). It functions in the pathway membrane lipid metabolism; glycerophospholipid metabolism. In terms of biological role, catalyzes the reduction of the glycolytic intermediate dihydroxyacetone phosphate (DHAP) to sn-glycerol 3-phosphate (G3P), the key precursor for phospholipid synthesis. The protein is Glycerol-3-phosphate dehydrogenase [NAD(P)+] of Polynucleobacter necessarius subsp. necessarius (strain STIR1).